Consider the following 64-residue polypeptide: Large ribosomal subunit protein uL29 (64 aa).

This sequence belongs to the universal ribosomal protein uL29 family.

This chain is Large ribosomal subunit protein uL29 (rpl29), found in Methanothermobacter thermautotrophicus (strain ATCC 29096 / DSM 1053 / JCM 10044 / NBRC 100330 / Delta H) (Methanobacterium thermoautotrophicum).